The following is a 129-amino-acid chain: Small ribosomal subunit protein uS11 (129 aa).

The protein belongs to the universal ribosomal protein uS11 family. In terms of assembly, part of the 30S ribosomal subunit. Interacts with proteins S7 and S18. Binds to IF-3.

Its function is as follows. Located on the platform of the 30S subunit, it bridges several disparate RNA helices of the 16S rRNA. Forms part of the Shine-Dalgarno cleft in the 70S ribosome. The sequence is that of Small ribosomal subunit protein uS11 from Vibrio campbellii (strain ATCC BAA-1116).